The following is a 73-amino-acid chain: Disintegrin cerastin (73 aa).

Residues 1 to 73 enclose the Disintegrin domain; that stretch reads EAGEECDCGT…ADCPRNGLYG (73 aa). 6 disulfides stabilise this stretch: Cys-6/Cys-21, Cys-8/Cys-16, Cys-15/Cys-38, Cys-29/Cys-35, Cys-34/Cys-59, and Cys-47/Cys-66. Positions 51 to 53 match the Cell attachment site motif; that stretch reads RGD.

Belongs to the venom metalloproteinase (M12B) family. P-II subfamily. P-IIa sub-subfamily. As to quaternary structure, monomer (disintegrin). Expressed by the venom gland.

It is found in the secreted. In terms of biological role, inhibits fibrinogen interaction with platelets. Acts by binding to alpha-IIb/beta-3 (ITGA2B/ITGB3) on the platelet surface and inhibits aggregation induced by ADP, thrombin, platelet-activating factor and collagen. The chain is Disintegrin cerastin from Crotalus cerastes cerastes (Mojave desert sidewinder).